The primary structure comprises 422 residues: Trichothecene biosynthesis transcription regulator TRI10 (422 aa).

This sequence belongs to the TRI10 transcription regulator family.

The protein resides in the nucleus. In terms of biological role, transcriptional activator of all of the trichothecene biosynthesis genes. Acts upstream of the cluster-encoded transcription factor TRI6 and is necessary for full expression of both the other trichothecene genes and the genes for the primary metabolic pathway that precedes the trichothecene biosynthetic pathway. This is Trichothecene biosynthesis transcription regulator TRI10 from Trichoderma arundinaceum.